Reading from the N-terminus, the 377-residue chain is Protein RecA (377 aa).

65-72 (GPESSGKT) lines the ATP pocket. The interval 329–377 (GDEEAAATKATETKTDAPKDKDKGKTKAKDKPADVTPGQIELAPDKSAK) is disordered. The segment covering 339 to 361 (TETKTDAPKDKDKGKTKAKDKPA) has biased composition (basic and acidic residues).

Belongs to the RecA family.

The protein localises to the cytoplasm. Its function is as follows. Can catalyze the hydrolysis of ATP in the presence of single-stranded DNA, the ATP-dependent uptake of single-stranded DNA by duplex DNA, and the ATP-dependent hybridization of homologous single-stranded DNAs. It interacts with LexA causing its activation and leading to its autocatalytic cleavage. The chain is Protein RecA from Levilactobacillus brevis (strain ATCC 367 / BCRC 12310 / CIP 105137 / JCM 1170 / LMG 11437 / NCIMB 947 / NCTC 947) (Lactobacillus brevis).